The sequence spans 1783 residues: uncharacterized protein (1783 aa).

A helical membrane pass occupies residues 16–36 (FFLLFGIIFVLFSIIFLETSI). The span at 105–119 (GSDSGQSNGSGDNQN) shows a compositional bias: low complexity. The disordered stretch occupies residues 105–125 (GSDSGQSNGSGDNQNKTIPRK). The next 8 membrane-spanning stretches (helical) occupy residues 917–937 (VSTVIAIFLIILALYLIILLI), 967–987 (VFAGIVAIVSSFLGVLFAFLL), 1010–1030 (WLSFFGSFFITFFVFEFISWI), 1084–1104 (LFTYVGLSSVALLLIGIAGTI), 1660–1680 (FLLGTIIPFIFITCVVLGISM), 1709–1729 (FIPAFVLALLISIGVLAGVLI), 1730–1750 (GIQAVVFNVAQVFLTNVFEFL), and 1752–1772 (YMVGIVLFGVTIFVIGSYFWI).

Belongs to the ABC-4 integral membrane protein family.

It is found in the cell membrane. This is an uncharacterized protein from Mycoplasma genitalium (strain ATCC 33530 / DSM 19775 / NCTC 10195 / G37) (Mycoplasmoides genitalium).